A 153-amino-acid polypeptide reads, in one-letter code: 6,7-dimethyl-8-ribityllumazine synthase (153 aa).

Residues F22, 56 to 58, and 80 to 82 contribute to the 5-amino-6-(D-ribitylamino)uracil site; these read AFE and CVI. 85–86 serves as a coordination point for (2S)-2-hydroxy-3-oxobutyl phosphate; the sequence is AT. H88 functions as the Proton donor in the catalytic mechanism. F113 contacts 5-amino-6-(D-ribitylamino)uracil. R127 is a (2S)-2-hydroxy-3-oxobutyl phosphate binding site.

The protein belongs to the DMRL synthase family.

It catalyses the reaction (2S)-2-hydroxy-3-oxobutyl phosphate + 5-amino-6-(D-ribitylamino)uracil = 6,7-dimethyl-8-(1-D-ribityl)lumazine + phosphate + 2 H2O + H(+). The protein operates within cofactor biosynthesis; riboflavin biosynthesis; riboflavin from 2-hydroxy-3-oxobutyl phosphate and 5-amino-6-(D-ribitylamino)uracil: step 1/2. Its function is as follows. Catalyzes the formation of 6,7-dimethyl-8-ribityllumazine by condensation of 5-amino-6-(D-ribitylamino)uracil with 3,4-dihydroxy-2-butanone 4-phosphate. This is the penultimate step in the biosynthesis of riboflavin. This chain is 6,7-dimethyl-8-ribityllumazine synthase, found in Endomicrobium trichonymphae.